The primary structure comprises 764 residues: Myotubularin-related protein 10-B (764 aa).

One can recognise a Myotubularin phosphatase domain in the interval 208–649; it reads FESYSDWDRE…THIQIWKLCY (442 aa).

Belongs to the protein-tyrosine phosphatase family. Non-receptor class myotubularin subfamily.

The chain is Myotubularin-related protein 10-B (mtmr10-b) from Xenopus laevis (African clawed frog).